Here is a 37-residue protein sequence, read N- to C-terminus: Large ribosomal subunit protein bL36 (37 aa).

This sequence belongs to the bacterial ribosomal protein bL36 family.

The chain is Large ribosomal subunit protein bL36 from Borreliella afzelii (strain PKo) (Borrelia afzelii).